The primary structure comprises 105 residues: Large ribosomal subunit protein uL24 (105 aa).

Belongs to the universal ribosomal protein uL24 family. Part of the 50S ribosomal subunit.

One of two assembly initiator proteins, it binds directly to the 5'-end of the 23S rRNA, where it nucleates assembly of the 50S subunit. Functionally, one of the proteins that surrounds the polypeptide exit tunnel on the outside of the subunit. This is Large ribosomal subunit protein uL24 from Vibrio atlanticus (strain LGP32) (Vibrio splendidus (strain Mel32)).